The following is a 252-amino-acid chain: LexA repressor (252 aa).

The tract at residues 1-46 (MPEENRGGHQPYTEESSVSALHPVRTDDSVGSSAEQTGDAPTLTER) is disordered. Positions 67-87 (IREIGEAVGLSSPSSVAHQLK) form a DNA-binding region, H-T-H motif. Catalysis depends on for autocatalytic cleavage activity residues serine 176 and lysine 213.

Belongs to the peptidase S24 family. As to quaternary structure, homodimer.

The enzyme catalyses Hydrolysis of Ala-|-Gly bond in repressor LexA.. Represses a number of genes involved in the response to DNA damage (SOS response), including recA and lexA. In the presence of single-stranded DNA, RecA interacts with LexA causing an autocatalytic cleavage which disrupts the DNA-binding part of LexA, leading to derepression of the SOS regulon and eventually DNA repair. The polypeptide is LexA repressor (Thermobifida fusca (strain YX)).